The sequence spans 459 residues: MAKVWSKRFDNALDPFIEKFNASIGFDRKLILEDLDCSIAHAKMLGKTQVLTSSESSQIINGLELIKVEYLEGKFSPGLPSEDIHYSIEEKLISLIGETGKKLHTGRSRNDQVGTDIRLWLRKEIDKIEILITDLQKSFFNIAKSNIYTLIPGYTHMQRAQPLSLAHHLLAYIEMLQRDRERFKEVRARVNISPLGAAALAGTKIKIDRQFTASELGFEKIYKNSIDAVSDRDFCIEFVSASALSMSHLSKISEEIILWVTDEFSFAKLTDKCATGSSLMPQKKNPDVPELIRGKTGRVYGHLQALLTMVKGVPLSYNKDFQEDKEPIFDTAETISSCMKAMTILINEGIEFNIKNLSDSVENDFSNATDLADYLVGKDVPFRTAYQVVGEIVKYCLKRKMLFKNLKIGEFKKFHPEFDEDVFSDLKPHNVVKSRNSEGGTGFVQVEKELNHWQKKLLL.

The protein belongs to the lyase 1 family. Argininosuccinate lyase subfamily.

It localises to the cytoplasm. It catalyses the reaction 2-(N(omega)-L-arginino)succinate = fumarate + L-arginine. It functions in the pathway amino-acid biosynthesis; L-arginine biosynthesis; L-arginine from L-ornithine and carbamoyl phosphate: step 3/3. The protein is Argininosuccinate lyase of Prochlorococcus marinus (strain MIT 9215).